Consider the following 148-residue polypeptide: uncharacterized protein (148 aa).

Residues 1–19 form the signal peptide; that stretch reads MLSNAKLLLSLAMASTALG. 2 N-linked (GlcNAc...) asparagine glycosylation sites follow: asparagine 41 and asparagine 59. Asparagine 127 carries GPI-anchor amidated asparagine lipidation. Positions 128-148 are cleaved as a propeptide — removed in mature form; the sequence is AANARAIPGALGLAGAVMMLL.

This sequence belongs to the SED1 family. Post-translationally, the GPI-anchor is attached to the protein in the endoplasmic reticulum and serves to target the protein to the cell surface. There, the glucosamine-inositol phospholipid moiety is cleaved off and the GPI-modified mannoprotein is covalently attached via its lipidless GPI glycan remnant to the 1,6-beta-glucan of the outer cell wall layer.

It is found in the secreted. It localises to the cell wall. The protein resides in the membrane. Functionally, cell wall protein that plays a role in adaptation and resistance to cell wall stress. This is an uncharacterized protein from Saccharomyces cerevisiae (strain ATCC 204508 / S288c) (Baker's yeast).